The primary structure comprises 526 residues: Bifunctional purine biosynthesis protein PurH (526 aa).

Positions 1–145 constitute an MGS-like domain; it reads MSKAPLALLS…KNHAHVGIVT (145 aa).

The protein belongs to the PurH family.

The catalysed reaction is (6R)-10-formyltetrahydrofolate + 5-amino-1-(5-phospho-beta-D-ribosyl)imidazole-4-carboxamide = 5-formamido-1-(5-phospho-D-ribosyl)imidazole-4-carboxamide + (6S)-5,6,7,8-tetrahydrofolate. It carries out the reaction IMP + H2O = 5-formamido-1-(5-phospho-D-ribosyl)imidazole-4-carboxamide. It participates in purine metabolism; IMP biosynthesis via de novo pathway; 5-formamido-1-(5-phospho-D-ribosyl)imidazole-4-carboxamide from 5-amino-1-(5-phospho-D-ribosyl)imidazole-4-carboxamide (10-formyl THF route): step 1/1. Its pathway is purine metabolism; IMP biosynthesis via de novo pathway; IMP from 5-formamido-1-(5-phospho-D-ribosyl)imidazole-4-carboxamide: step 1/1. The sequence is that of Bifunctional purine biosynthesis protein PurH from Psychrobacter cryohalolentis (strain ATCC BAA-1226 / DSM 17306 / VKM B-2378 / K5).